A 274-amino-acid polypeptide reads, in one-letter code: Rhamnulose-1-phosphate aldolase (274 aa).

Residue Glu-117 is part of the active site. Residues His-141, His-143, and His-212 each coordinate Zn(2+).

This sequence belongs to the aldolase class II family. RhaD subfamily. In terms of assembly, homotetramer. Requires Zn(2+) as cofactor.

It is found in the cytoplasm. It carries out the reaction L-rhamnulose 1-phosphate = (S)-lactaldehyde + dihydroxyacetone phosphate. The protein operates within carbohydrate degradation; L-rhamnose degradation; glycerone phosphate from L-rhamnose: step 3/3. Functionally, catalyzes the reversible cleavage of L-rhamnulose-1-phosphate to dihydroxyacetone phosphate (DHAP) and L-lactaldehyde. This is Rhamnulose-1-phosphate aldolase from Escherichia coli O45:K1 (strain S88 / ExPEC).